The sequence spans 524 residues: Light-independent protochlorophyllide reductase subunit B (524 aa).

[4Fe-4S] cluster is bound at residue aspartate 36. Aspartate 290 serves as the catalytic Proton donor. Substrate is bound at residue 425-426; it reads GL.

It belongs to the ChlB/BchB/BchZ family. As to quaternary structure, protochlorophyllide reductase is composed of three subunits; ChlL, ChlN and ChlB. Forms a heterotetramer of two ChlB and two ChlN subunits. It depends on [4Fe-4S] cluster as a cofactor.

It catalyses the reaction chlorophyllide a + oxidized 2[4Fe-4S]-[ferredoxin] + 2 ADP + 2 phosphate = protochlorophyllide a + reduced 2[4Fe-4S]-[ferredoxin] + 2 ATP + 2 H2O. Its pathway is porphyrin-containing compound metabolism; chlorophyll biosynthesis (light-independent). Functionally, component of the dark-operative protochlorophyllide reductase (DPOR) that uses Mg-ATP and reduced ferredoxin to reduce ring D of protochlorophyllide (Pchlide) to form chlorophyllide a (Chlide). This reaction is light-independent. The NB-protein (ChlN-ChlB) is the catalytic component of the complex. The chain is Light-independent protochlorophyllide reductase subunit B from Parasynechococcus marenigrum (strain WH8102).